The sequence spans 319 residues: Very-long-chain 3-oxoacyl-CoA reductase-A (319 aa).

Residues 17-37 (LFWVGALITASLALYVVYKTI) form a helical membrane-spanning segment. Residue 56–85 (GKWAVVTGATDGIGKSYAEELARRGFSMML) coordinates NADP(+). 2 consecutive transmembrane segments (helical) span residues 188-208 (GVILNISSASGMFPVPLLTIY) and 282-302 (AVMGWVTTILAPIDLVLNLGL). S195 provides a ligand contact to substrate. The active-site Proton acceptor is Y208.

The protein belongs to the short-chain dehydrogenases/reductases (SDR) family. 17-beta-HSD 3 subfamily.

It localises to the endoplasmic reticulum membrane. The catalysed reaction is a very-long-chain (3R)-3-hydroxyacyl-CoA + NADP(+) = a very-long-chain 3-oxoacyl-CoA + NADPH + H(+). The enzyme catalyses 17beta-estradiol + NAD(+) = estrone + NADH + H(+). It carries out the reaction 17beta-estradiol + NADP(+) = estrone + NADPH + H(+). It functions in the pathway lipid metabolism; fatty acid biosynthesis. It participates in steroid biosynthesis; estrogen biosynthesis. Its function is as follows. Catalyzes the second of the four reactions of the long-chain fatty acids elongation cycle. This endoplasmic reticulum-bound enzymatic process, allows the addition of two carbons to the chain of long- and very long-chain fatty acids/VLCFAs per cycle. This enzyme has a 3-ketoacyl-CoA reductase activity, reducing 3-ketoacyl-CoA to 3-hydroxyacyl-CoA, within each cycle of fatty acid elongation. Thereby, it may participate in the production of VLCFAs of different chain lengths that are involved in multiple biological processes as precursors of membrane lipids and lipid mediators. May also catalyze the transformation of estrone (E1) into estradiol (E2) and play a role in estrogen formation. The chain is Very-long-chain 3-oxoacyl-CoA reductase-A (hsd17b12a) from Danio rerio (Zebrafish).